The sequence spans 361 residues: Phospho-N-acetylmuramoyl-pentapeptide-transferase (361 aa).

Transmembrane regions (helical) follow at residues 25–45 (TGGA…WIID), 72–92 (TPTM…VLWA), 95–115 (LNPY…VGFY), 135–155 (LLIE…LGRG), 169–189 (VVLN…VGAG), 200–220 (GLAI…SYLV), 240–260 (LAVL…FNAP), 264–284 (IFMG…IAVA), 289–309 (IVLA…IVQV), and 338–358 (QIVI…LSTL).

This sequence belongs to the glycosyltransferase 4 family. MraY subfamily. The cofactor is Mg(2+).

It localises to the cell inner membrane. The enzyme catalyses UDP-N-acetyl-alpha-D-muramoyl-L-alanyl-gamma-D-glutamyl-meso-2,6-diaminopimeloyl-D-alanyl-D-alanine + di-trans,octa-cis-undecaprenyl phosphate = di-trans,octa-cis-undecaprenyl diphospho-N-acetyl-alpha-D-muramoyl-L-alanyl-D-glutamyl-meso-2,6-diaminopimeloyl-D-alanyl-D-alanine + UMP. It participates in cell wall biogenesis; peptidoglycan biosynthesis. In terms of biological role, catalyzes the initial step of the lipid cycle reactions in the biosynthesis of the cell wall peptidoglycan: transfers peptidoglycan precursor phospho-MurNAc-pentapeptide from UDP-MurNAc-pentapeptide onto the lipid carrier undecaprenyl phosphate, yielding undecaprenyl-pyrophosphoryl-MurNAc-pentapeptide, known as lipid I. This Rhodopseudomonas palustris (strain HaA2) protein is Phospho-N-acetylmuramoyl-pentapeptide-transferase.